A 323-amino-acid chain; its full sequence is Fatty acid desaturase 4, chloroplastic (323 aa).

The N-terminal 77 residues, 1-77, are a transit peptide targeting the chloroplast; that stretch reads MAVSLPTKYP…PRPNREKLVV (77 aa). Transmembrane regions (helical) follow at residues 101–121 and 131–151; these read WVAAGCTTLFVSLAKSVIGGF and LAGYAGYILADLGSGVYHWAI. The Histidine box-1 signature appears at 170–173; the sequence is QGHH. The chain crosses the membrane as a helical span at residues 204–224; it reads LAFNDPVFHGFVCTFAFCILF. The short motif at 229 to 233 is the Histidine box-2 element; sequence HAWAH. Residues 258–262 carry the Histidine box-3 motif; the sequence is HAEHH.

The protein belongs to the fatty acid desaturase CarF family. Fe(2+) is required as a cofactor.

The protein localises to the plastid. It localises to the chloroplast membrane. It catalyses the reaction a 1-acyl-2-hexadecanoyl-glycerolipid + 2 reduced [2Fe-2S]-[ferredoxin] + O2 + 2 H(+) = a 1-acyl-2-[(3E)-hexadec-3-enoyl]-glycerolipid + 2 oxidized [2Fe-2S]-[ferredoxin] + 2 H2O. It participates in lipid metabolism; fatty acid metabolism. Its function is as follows. Fatty acid desaturase involved in the production of chloroplast-specific phosphatidylglycerol molecular species containing 16:1(3E). Catalyzes the formation of a trans double bond introduced close to the carboxyl group of palmitic acid, which is specifically esterified to the sn-2 glyceryl carbon of phosphatidylglycerol. The polypeptide is Fatty acid desaturase 4, chloroplastic (Arabidopsis thaliana (Mouse-ear cress)).